The primary structure comprises 660 residues: Bifunctional polymyxin resistance protein ArnA (660 aa).

The formyltransferase ArnAFT stretch occupies residues 1–304; it reads MKAVIFAYHD…ALGLVKGALL (304 aa). Residue histidine 104 is the Proton donor; for formyltransferase activity of the active site. (6R)-10-formyltetrahydrofolate-binding positions include arginine 114 and 136 to 140; that span reads TARAD. The segment at 314-660 is dehydrogenase ArnADH; that stretch reads RRTRVLILGV…QTVDLPDAAQ (347 aa). Residues aspartate 347 and 368-369 contribute to the NAD(+) site; that span reads DI. UDP-alpha-D-glucuronate is bound by residues alanine 393, tyrosine 398, and 432–433; that span reads TS. Glutamate 434 (proton acceptor; for decarboxylase activity) is an active-site residue. Residues arginine 460, asparagine 492, 526–535, and tyrosine 613 contribute to the UDP-alpha-D-glucuronate site; that span reads KLVDGGAQKR. The Proton donor; for decarboxylase activity role is filled by arginine 619.

It in the N-terminal section; belongs to the Fmt family. UDP-L-Ara4N formyltransferase subfamily. In the C-terminal section; belongs to the NAD(P)-dependent epimerase/dehydratase family. UDP-glucuronic acid decarboxylase subfamily. As to quaternary structure, homohexamer, formed by a dimer of trimers.

The catalysed reaction is UDP-alpha-D-glucuronate + NAD(+) = UDP-beta-L-threo-pentopyranos-4-ulose + CO2 + NADH. It carries out the reaction UDP-4-amino-4-deoxy-beta-L-arabinose + (6R)-10-formyltetrahydrofolate = UDP-4-deoxy-4-formamido-beta-L-arabinose + (6S)-5,6,7,8-tetrahydrofolate + H(+). It functions in the pathway nucleotide-sugar biosynthesis; UDP-4-deoxy-4-formamido-beta-L-arabinose biosynthesis; UDP-4-deoxy-4-formamido-beta-L-arabinose from UDP-alpha-D-glucuronate: step 1/3. Its pathway is nucleotide-sugar biosynthesis; UDP-4-deoxy-4-formamido-beta-L-arabinose biosynthesis; UDP-4-deoxy-4-formamido-beta-L-arabinose from UDP-alpha-D-glucuronate: step 3/3. It participates in bacterial outer membrane biogenesis; lipopolysaccharide biosynthesis. Its function is as follows. Bifunctional enzyme that catalyzes the oxidative decarboxylation of UDP-glucuronic acid (UDP-GlcUA) to UDP-4-keto-arabinose (UDP-Ara4O) and the addition of a formyl group to UDP-4-amino-4-deoxy-L-arabinose (UDP-L-Ara4N) to form UDP-L-4-formamido-arabinose (UDP-L-Ara4FN). The modified arabinose is attached to lipid A and is required for resistance to polymyxin and cationic antimicrobial peptides. The sequence is that of Bifunctional polymyxin resistance protein ArnA from Sodalis glossinidius (strain morsitans).